The following is a 182-amino-acid chain: Troponin I, fast skeletal muscle (182 aa).

Glycine 2 is modified (N-acetylglycine). Residues 2 to 48 (GDEEKRNRAITARRQHLKSVMLQIAATELEKEESRRESEKQNYLSEH) are involved in binding TNC. At threonine 12 the chain carries Phosphothreonine. Positions 29–41 (ELEKEESRRESEK) are enriched in basic and acidic residues. The segment at 29–53 (ELEKEESRRESEKQNYLSEHCPPLH) is disordered. The segment at 97–117 (NQKLFDLRGKFKRPPLRRVRM) is involved in binding TNC and actin. Serine 118 bears the Phosphoserine mark.

This sequence belongs to the troponin I family. In terms of assembly, binds to actin and tropomyosin.

Troponin I is the inhibitory subunit of troponin, the thin filament regulatory complex which confers calcium-sensitivity to striated muscle actomyosin ATPase activity. In Rattus norvegicus (Rat), this protein is Troponin I, fast skeletal muscle (Tnni2).